Here is a 290-residue protein sequence, read N- to C-terminus: UPF0761 membrane protein CKO_03126 (290 aa).

6 consecutive transmembrane segments (helical) span residues 44-64 (LLSL…FPMF), 104-124 (VGAC…DSAL), 140-160 (FAVY…SLAI), 183-203 (VFPL…VPTT), 210-230 (AVVG…GFAL), and 244-264 (VLAV…IVLL).

This sequence belongs to the UPF0761 family.

It localises to the cell inner membrane. This chain is UPF0761 membrane protein CKO_03126, found in Citrobacter koseri (strain ATCC BAA-895 / CDC 4225-83 / SGSC4696).